The sequence spans 658 residues: Cysteine-rich receptor-like protein kinase 14 (658 aa).

The first 22 residues, 1–22 (MELKNLFPIFWFVLVGFAVVSA), serve as a signal peptide directing secretion. 2 Gnk2-homologous domains span residues 23–125 (QECG…NSSF) and 131–240 (AEPH…LFPF). Over 23-277 (QECGKTGFFV…ATKKGSITIS (255 aa)) the chain is Extracellular. N-linked (GlcNAc...) asparagine glycans are attached at residues Asn-51, Asn-60, Asn-102, Asn-122, and Asn-146. The helical transmembrane segment at 278–298 (IGIVWAIIIPTVIVVFLVLLA) threads the bilayer. Residues 299–658 (LGFVVYRRRK…DVTITDFEPR (360 aa)) lie on the Cytoplasmic side of the membrane. One can recognise a Protein kinase domain in the interval 337–614 (FSESNIIGRG…NMMLINNSYV (278 aa)). ATP-binding positions include 343–351 (IGRGGFGEV) and Lys-364. Residue Tyr-409 is modified to Phosphotyrosine. Catalysis depends on Asp-461, which acts as the Proton acceptor. Residue Ser-465 is modified to Phosphoserine. Residue Thr-501 is modified to Phosphothreonine. The residue at position 509 (Tyr-509) is a Phosphotyrosine.

The protein belongs to the protein kinase superfamily. Ser/Thr protein kinase family. CRK subfamily.

The protein localises to the membrane. It carries out the reaction L-seryl-[protein] + ATP = O-phospho-L-seryl-[protein] + ADP + H(+). The enzyme catalyses L-threonyl-[protein] + ATP = O-phospho-L-threonyl-[protein] + ADP + H(+). This chain is Cysteine-rich receptor-like protein kinase 14 (CRK14), found in Arabidopsis thaliana (Mouse-ear cress).